The following is a 188-amino-acid chain: SRP-independent targeting protein 3 (188 aa).

A helical transmembrane segment spans residues 27–47 (TIIMYIRILYCSSIGISWIIY). S157 carries the phosphoserine modification. Residues 157 to 188 (SLFGGMGQTGPKTDKKSIEEAERAGNAGVKAE) are disordered. Positions 168 to 179 (KTDKKSIEEAER) are enriched in basic and acidic residues.

This sequence belongs to the PHO88 family. As to quaternary structure, interacts with ENV10/SND2. ENV10/SND2 and PHO88/SND3 form a complex with the translocon in the endoplasmic reticulum membrane.

It is found in the endoplasmic reticulum membrane. It localises to the mitochondrion. Its function is as follows. Functions in the SND pathway, a SRP (signal recognition particle) and GET (guided entry of tail-anchored proteins) independent pathway for targeting a broad range of substrate proteins to the endoplasmic reticulum. SND functions in parallel to GET in targeting proteins with downstream hydrophobic motifs. Involved in inorganic phosphate uptake. Also involved in telomere length regulation and maintenance. In Saccharomyces cerevisiae (strain ATCC 204508 / S288c) (Baker's yeast), this protein is SRP-independent targeting protein 3.